We begin with the raw amino-acid sequence, 248 residues long: N-acylneuraminate-9-phosphatase (248 aa).

Asp12 serves as a coordination point for Mg(2+). Phosphate-binding residues include Leu13, Asp14, Thr131, Asn132, and Lys164. Asp14 serves as a coordination point for Mg(2+). A Mg(2+)-binding site is contributed by Asp189.

The protein belongs to the HAD-like hydrolase superfamily. NANP family. It depends on Mg(2+) as a cofactor.

It carries out the reaction N-acetylneuraminate 9-phosphate + H2O = N-acetylneuraminate + phosphate. It catalyses the reaction N-glycoloylneuraminate 9-phosphate + H2O = N-glycoloylneuraminate + phosphate. The protein operates within amino-sugar metabolism; N-acetylneuraminate biosynthesis. With respect to regulation, inhibited by calcium. Inhibited by vanadate, sodium orthovanate and phosphonate. Catalyzes the dephosphorylation of N-acylneuraminate 9-phosphate (Neu5Ac-9-P) to sialic acid N-acetylneuraminic acid (Neu5Ac). May also use N-glycoloylneuraminate 9-phosphate as substrate. This Mus musculus (Mouse) protein is N-acylneuraminate-9-phosphatase.